An 804-amino-acid polypeptide reads, in one-letter code: Probable replication endonuclease from prophage-like region (804 aa).

Active-site O-(5'-phospho-DNA)-tyrosine intermediate residues include Y498 and Y502.

It belongs to the phage GPA family.

Functionally, possible endonuclease which induces a single-strand cut and initiates DNA replication. The chain is Probable replication endonuclease from prophage-like region from Shigella boydii serotype 4 (strain Sb227).